The chain runs to 98 residues: Ribonuclease P protein component 4 (98 aa).

Positions 62, 65, 85, and 88 each coordinate Zn(2+).

It belongs to the eukaryotic/archaeal RNase P protein component 4 family. As to quaternary structure, consists of a catalytic RNA component and at least 4-5 protein subunits. Requires Zn(2+) as cofactor.

The protein localises to the cytoplasm. The enzyme catalyses Endonucleolytic cleavage of RNA, removing 5'-extranucleotides from tRNA precursor.. Functionally, part of ribonuclease P, a protein complex that generates mature tRNA molecules by cleaving their 5'-ends. The polypeptide is Ribonuclease P protein component 4 (Thermoplasma volcanium (strain ATCC 51530 / DSM 4299 / JCM 9571 / NBRC 15438 / GSS1)).